Reading from the N-terminus, the 390-residue chain is Galactokinase (390 aa).

Substrate is bound at residue glutamate 33 to aspartate 36. Residues serine 67 and glycine 124–serine 130 each bind ATP. Positions 130 and 162 each coordinate Mg(2+). Aspartate 174 acts as the Proton acceptor in catalysis. A substrate-binding site is contributed by tyrosine 224.

The protein belongs to the GHMP kinase family. GalK subfamily.

Its subcellular location is the cytoplasm. The enzyme catalyses alpha-D-galactose + ATP = alpha-D-galactose 1-phosphate + ADP + H(+). Its pathway is carbohydrate metabolism; galactose metabolism. In terms of biological role, catalyzes the transfer of the gamma-phosphate of ATP to D-galactose to form alpha-D-galactose-1-phosphate (Gal-1-P). The protein is Galactokinase of Exiguobacterium sibiricum (strain DSM 17290 / CCUG 55495 / CIP 109462 / JCM 13490 / 255-15).